Consider the following 140-residue polypeptide: Large-conductance mechanosensitive channel (140 aa).

3 consecutive transmembrane segments (helical) span residues V14 to L34, Y37 to L57, and F66 to L86.

It belongs to the MscL family. In terms of assembly, homopentamer.

The protein resides in the cell membrane. Channel that opens in response to stretch forces in the membrane lipid bilayer. May participate in the regulation of osmotic pressure changes within the cell. This chain is Large-conductance mechanosensitive channel, found in Pediococcus pentosaceus (strain ATCC 25745 / CCUG 21536 / LMG 10740 / 183-1w).